Consider the following 253-residue polypeptide: Sulfate transporter CysZ (253 aa).

The next 4 membrane-spanning stretches (helical) occupy residues 31-51 (FVILPLLVNIVLMGGAFWWLF), 72-92 (LSYLLWPIAVISVLLVFGYFF), 151-171 (IVLLILYFIPGIGQTIAPVLW), and 222-242 (IPVLNLFIMPVAVCGATAMWV).

It belongs to the CysZ family.

The protein localises to the cell inner membrane. Possibly involved in sulfate transport. In terms of biological role, high affinity, high specificity proton-dependent sulfate transporter, which mediates sulfate uptake. Provides the sulfur source for the cysteine synthesis pathway. The sequence is that of Sulfate transporter CysZ from Salmonella typhimurium (strain LT2 / SGSC1412 / ATCC 700720).